A 1786-amino-acid chain; its full sequence is Transcription initiation factor TFIID subunit 1b (1786 aa).

Disordered stretches follow at residues 54-83 (EDYD…PVVL) and 350-372 (FGSR…PQLL). Basic and acidic residues predominate over residues 61–83 (GQEKEHVPVEKSFDSEEREPVVL). Polar residues predominate over residues 352–362 (SRGSQSTNEST). Positions 574 to 650 (MTIVVKSLGG…VHLLRTKVHL (77 aa)) constitute a Ubiquitin-like domain. The segment covering 1303 to 1313 (MKTNKHCPKYR) has biased composition (basic residues). 3 disordered regions span residues 1303 to 1382 (MKTN…DVAA), 1397 to 1471 (LKIS…KDQA), and 1596 to 1634 (SERE…ESGQ). The span at 1357–1377 (TKISVNEATKVGDSTSKTPGS) shows a compositional bias: polar residues. Positions 1397-1407 (LKISSKAKPKA) are enriched in basic residues. Positions 1433–1464 (HNPSVSGQLLPSTETDQAASSRYTTSVPQPSL) are enriched in polar residues. Coiled coils occupy residues 1591 to 1620 (REVI…LENY) and 1752 to 1786 (LADE…DSLR). The segment covering 1604-1613 (RKAKQKKKLQ) has biased composition (basic residues). In terms of domain architecture, Bromo spans 1656–1774 (KRRKKGQVGL…DEYRDELKEA (119 aa)).

Belongs to the TAF1 family. As to quaternary structure, component of the TFIID complex. TFIID is composed of TATA binding protein (TBP) and a number of TBP-associated factors (TAFs) whose MWs range from 14-217 kDa. Expressed in roots, shoots, leaves and inflorescences.

Its subcellular location is the nucleus. Functionally, TAFs are components of the transcription factor IID (TFIID) complex that is essential for mediating regulation of RNA polymerase transcription. Core scaffold of the TFIID complex. Acts as a histone acetyltransferase involved in the light regulation of growth and gene expression. Required for H3K9, H3K27, and H4K12 acetylation on the target promoters. The polypeptide is Transcription initiation factor TFIID subunit 1b (TAF1B) (Arabidopsis thaliana (Mouse-ear cress)).